A 303-amino-acid chain; its full sequence is Protoheme IX farnesyltransferase (303 aa).

The next 9 helical transmembrane spans lie at 17–37, 42–62, 91–111, 114–134, 142–162, 168–188, 208–228, 231–251, and 270–290; these read GVVMLLMVTAVAGMFLATEPA, LATFIPAFVGLSLAMMASAAI, AAITFAVLLATASMIMLYFLV, LTAWLTLFGFVGYAFIYTLYL, IVIGGIAGAIPPLLGWTAVTG, AWLLVLIIFVWTPPHFWALAI, IPFTRESVLYYTILLFICTLL, LTGMSDLIYLLSALILGLVFL, and FGYSITYLFALFTALLVDHYL.

It belongs to the UbiA prenyltransferase family. Protoheme IX farnesyltransferase subfamily.

It localises to the cell inner membrane. It carries out the reaction heme b + (2E,6E)-farnesyl diphosphate + H2O = Fe(II)-heme o + diphosphate. The protein operates within porphyrin-containing compound metabolism; heme O biosynthesis; heme O from protoheme: step 1/1. Converts heme B (protoheme IX) to heme O by substitution of the vinyl group on carbon 2 of heme B porphyrin ring with a hydroxyethyl farnesyl side group. This Alcanivorax borkumensis (strain ATCC 700651 / DSM 11573 / NCIMB 13689 / SK2) protein is Protoheme IX farnesyltransferase.